The primary structure comprises 264 residues: MSKITSSTLRTFKQEGKKFTALTAYDASFAGAFDSEGIDVLLVGDSMGMVLQGHSDTLPVTVEEIAYHTRCVRRGIERALLIADMPFMSYATPEQTMINATTLMQAGANMVKVEGGKWLLESVAMLTERGIPVCAHLGLTPQSVHVFGGFKVQGRDADNAQRILDEAKALEAAGAQLLVVECIPAPLAKAITDALTIPVIGIGAGKDTDGQILVMHDVLGISSGYIPRFSKNYLKQTGEIRAAVRAYIDEVAQGIFPGSEHTFN.

2 residues coordinate Mg(2+): Asp45 and Asp84. Residues 45–46 (DS), Asp84, and Lys112 contribute to the 3-methyl-2-oxobutanoate site. Glu114 provides a ligand contact to Mg(2+). The Proton acceptor role is filled by Glu181.

The protein belongs to the PanB family. Homodecamer; pentamer of dimers. Mg(2+) serves as cofactor.

The protein localises to the cytoplasm. It catalyses the reaction 3-methyl-2-oxobutanoate + (6R)-5,10-methylene-5,6,7,8-tetrahydrofolate + H2O = 2-dehydropantoate + (6S)-5,6,7,8-tetrahydrofolate. It functions in the pathway cofactor biosynthesis; (R)-pantothenate biosynthesis; (R)-pantoate from 3-methyl-2-oxobutanoate: step 1/2. Its function is as follows. Catalyzes the reversible reaction in which hydroxymethyl group from 5,10-methylenetetrahydrofolate is transferred onto alpha-ketoisovalerate to form ketopantoate. This Shewanella pealeana (strain ATCC 700345 / ANG-SQ1) protein is 3-methyl-2-oxobutanoate hydroxymethyltransferase.